The primary structure comprises 256 residues: Small ribosomal subunit protein eS1 (256 aa).

The span at 1-18 shows a compositional bias: basic residues; sequence MAVGKNKRLSKGKKGLKK. A disordered region spans residues 1-22; the sequence is MAVGKNKRLSKGKKGLKKKTQD. N-acetylalanine; partial is present on Ala-2.

The protein belongs to the eukaryotic ribosomal protein eS1 family. In terms of assembly, component of the small ribosomal subunit (SSU). Mature N.crassa ribosomes consist of a small (40S) and a large (60S) subunit. The 40S small subunit contains 1 molecule of ribosomal RNA (18S rRNA) and at least 32 different proteins. The large 60S subunit contains 3 rRNA molecules (26S, 5.8S and 5S rRNA) and at least 42 different proteins.

It is found in the cytoplasm. Component of the ribosome, a large ribonucleoprotein complex responsible for the synthesis of proteins in the cell. The small ribosomal subunit (SSU) binds messenger RNAs (mRNAs) and translates the encoded message by selecting cognate aminoacyl-transfer RNA (tRNA) molecules. The large subunit (LSU) contains the ribosomal catalytic site termed the peptidyl transferase center (PTC), which catalyzes the formation of peptide bonds, thereby polymerizing the amino acids delivered by tRNAs into a polypeptide chain. The nascent polypeptides leave the ribosome through a tunnel in the LSU and interact with protein factors that function in enzymatic processing, targeting, and the membrane insertion of nascent chains at the exit of the ribosomal tunnel. This Neurospora crassa (strain ATCC 24698 / 74-OR23-1A / CBS 708.71 / DSM 1257 / FGSC 987) protein is Small ribosomal subunit protein eS1 (rps1).